The sequence spans 344 residues: Mycothiol acetyltransferase (344 aa).

E36 contributes to the 1D-myo-inositol 2-(L-cysteinylamino)-2-deoxy-alpha-D-glucopyranoside binding site. N-acetyltransferase domains follow at residues 40–179 (LALR…TPLP) and 187–344 (VTVR…PSTG). The disordered stretch occupies residues 61–83 (ADTSGPNVPDTPGDQNAADTSTM). Over residues 73–83 (GDQNAADTSTM) the composition is skewed to polar residues. 109–111 (VVV) serves as a coordination point for acetyl-CoA. Residues E214, K253, and E272 each contribute to the 1D-myo-inositol 2-(L-cysteinylamino)-2-deoxy-alpha-D-glucopyranoside site. Acetyl-CoA contacts are provided by residues 276–278 (VGV) and 283–289 (GGAGLGR). Y310 contacts 1D-myo-inositol 2-(L-cysteinylamino)-2-deoxy-alpha-D-glucopyranoside. Residue 315 to 320 (NVRAVR) coordinates acetyl-CoA.

It belongs to the acetyltransferase family. MshD subfamily. Monomer.

It carries out the reaction 1D-myo-inositol 2-(L-cysteinylamino)-2-deoxy-alpha-D-glucopyranoside + acetyl-CoA = mycothiol + CoA + H(+). In terms of biological role, catalyzes the transfer of acetyl from acetyl-CoA to desacetylmycothiol (Cys-GlcN-Ins) to form mycothiol. This Frankia casuarinae (strain DSM 45818 / CECT 9043 / HFP020203 / CcI3) protein is Mycothiol acetyltransferase.